The sequence spans 377 residues: uncharacterized protein (377 aa).

The segment at 1-25 (MAQQTNVAGQKTEKQRKAPFRADHV) is disordered. Basic and acidic residues predominate over residues 11–24 (KTEKQRKAPFRADH).

To B.subtilis YxjG.

This is an uncharacterized protein from Bacillus subtilis (strain 168).